We begin with the raw amino-acid sequence, 119 residues long: UPF0102 protein Athe_0977 (119 aa).

Belongs to the UPF0102 family.

In Caldicellulosiruptor bescii (strain ATCC BAA-1888 / DSM 6725 / KCTC 15123 / Z-1320) (Anaerocellum thermophilum), this protein is UPF0102 protein Athe_0977.